Reading from the N-terminus, the 447-residue chain is Na(+)-translocating NADH-quinone reductase subunit A (447 aa).

This sequence belongs to the NqrA family. As to quaternary structure, composed of six subunits; NqrA, NqrB, NqrC, NqrD, NqrE and NqrF.

The catalysed reaction is a ubiquinone + n Na(+)(in) + NADH + H(+) = a ubiquinol + n Na(+)(out) + NAD(+). Its function is as follows. NQR complex catalyzes the reduction of ubiquinone-1 to ubiquinol by two successive reactions, coupled with the transport of Na(+) ions from the cytoplasm to the periplasm. NqrA to NqrE are probably involved in the second step, the conversion of ubisemiquinone to ubiquinol. This chain is Na(+)-translocating NADH-quinone reductase subunit A, found in Yersinia pestis bv. Antiqua (strain Angola).